A 154-amino-acid polypeptide reads, in one-letter code: Fimbrial protein (154 aa).

Residues 1-6 (MKAQKG) constitute a propeptide, leader sequence. Phe-7 bears the N-methylphenylalanine mark. A helical transmembrane segment spans residues 7–27 (FTLIELMIVVAIIGILAAIAI). Cysteines 133 and 151 form a disulfide. O-linked (FucNAc...) serine glycosylation is present at Ser-154.

Belongs to the N-Me-Phe pilin family. In terms of assembly, the pili are polar flexible filaments of about 5.4 nanometers diameter and 2.5 micrometers average length; they consist of only a single polypeptide chain arranged in a helical configuration of five subunits per turn in the assembled pilus. In terms of processing, O-glycosylated; glycan consists of 5NbetaOHC47NFmPse(alpha2-4)Xyl(beta1-3)FucNAc in beta1-O linkage to Ser.

It is found in the fimbrium. It localises to the membrane. The chain is Fimbrial protein (pilA) from Pseudomonas aeruginosa.